The primary structure comprises 653 residues: Fructose-1,6-bisphosphatase class 3 (653 aa).

It belongs to the FBPase class 3 family. Mn(2+) is required as a cofactor.

The catalysed reaction is beta-D-fructose 1,6-bisphosphate + H2O = beta-D-fructose 6-phosphate + phosphate. It functions in the pathway carbohydrate biosynthesis; gluconeogenesis. The sequence is that of Fructose-1,6-bisphosphatase class 3 from Listeria monocytogenes serovar 1/2a (strain ATCC BAA-679 / EGD-e).